A 93-amino-acid chain; its full sequence is YcgL domain-containing protein Shew_2183 (93 aa).

Residues 1-85 (MICAVYKSRL…PPVNLLEEYK (85 aa)) enclose the YcgL domain.

The chain is YcgL domain-containing protein Shew_2183 from Shewanella loihica (strain ATCC BAA-1088 / PV-4).